Reading from the N-terminus, the 352-residue chain is Biotin synthase (352 aa).

One can recognise a Radical SAM core domain in the interval N44–Q262. C59, C63, and C66 together coordinate [4Fe-4S] cluster. C103, C134, C194, and R266 together coordinate [2Fe-2S] cluster.

Belongs to the radical SAM superfamily. Biotin synthase family. In terms of assembly, homodimer. Requires [4Fe-4S] cluster as cofactor. The cofactor is [2Fe-2S] cluster.

It catalyses the reaction (4R,5S)-dethiobiotin + (sulfur carrier)-SH + 2 reduced [2Fe-2S]-[ferredoxin] + 2 S-adenosyl-L-methionine = (sulfur carrier)-H + biotin + 2 5'-deoxyadenosine + 2 L-methionine + 2 oxidized [2Fe-2S]-[ferredoxin]. It functions in the pathway cofactor biosynthesis; biotin biosynthesis; biotin from 7,8-diaminononanoate: step 2/2. In terms of biological role, catalyzes the conversion of dethiobiotin (DTB) to biotin by the insertion of a sulfur atom into dethiobiotin via a radical-based mechanism. This is Biotin synthase from Pseudomonas savastanoi pv. phaseolicola (strain 1448A / Race 6) (Pseudomonas syringae pv. phaseolicola (strain 1448A / Race 6)).